The chain runs to 329 residues: L-arabinose-binding periplasmic protein (329 aa).

Positions 1–23 (MHKFTKALAAIGLAAVMSQSAMA) are cleaved as a signal peptide.

The protein belongs to the bacterial solute-binding protein 2 family.

Its subcellular location is the periplasm. Involved in the high-affinity L-arabinose membrane transport system. Binds with high affinity to arabinose, but can also bind D-galactose (approximately 2-fold reduction) and D-fucose (approximately 40-fold reduction). The sequence is that of L-arabinose-binding periplasmic protein (araF) from Escherichia coli (strain K12).